A 94-amino-acid polypeptide reads, in one-letter code: Pyrimidine/purine nucleoside phosphorylase (94 aa).

Belongs to the nucleoside phosphorylase PpnP family.

The enzyme catalyses a purine D-ribonucleoside + phosphate = a purine nucleobase + alpha-D-ribose 1-phosphate. It catalyses the reaction adenosine + phosphate = alpha-D-ribose 1-phosphate + adenine. It carries out the reaction cytidine + phosphate = cytosine + alpha-D-ribose 1-phosphate. The catalysed reaction is guanosine + phosphate = alpha-D-ribose 1-phosphate + guanine. The enzyme catalyses inosine + phosphate = alpha-D-ribose 1-phosphate + hypoxanthine. It catalyses the reaction thymidine + phosphate = 2-deoxy-alpha-D-ribose 1-phosphate + thymine. It carries out the reaction uridine + phosphate = alpha-D-ribose 1-phosphate + uracil. The catalysed reaction is xanthosine + phosphate = alpha-D-ribose 1-phosphate + xanthine. Its function is as follows. Catalyzes the phosphorolysis of diverse nucleosides, yielding D-ribose 1-phosphate and the respective free bases. Can use uridine, adenosine, guanosine, cytidine, thymidine, inosine and xanthosine as substrates. Also catalyzes the reverse reactions. This is Pyrimidine/purine nucleoside phosphorylase from Citrobacter koseri (strain ATCC BAA-895 / CDC 4225-83 / SGSC4696).